Reading from the N-terminus, the 704-residue chain is Ion-translocating oxidoreductase complex subunit C (704 aa).

4Fe-4S ferredoxin-type domains are found at residues 368 to 397 and 407 to 436; these read MGAP…QQLY and KATA…VQYF. Residues cysteine 377, cysteine 380, cysteine 383, cysteine 387, cysteine 416, cysteine 419, cysteine 422, and cysteine 426 each contribute to the [4Fe-4S] cluster site. The segment at 536-684 is disordered; the sequence is RAKQAAHPMA…PADPRKAAVA (149 aa). A compositionally biased stretch (low complexity) spans 556–565; the sequence is KAAVEAAIAR.

Belongs to the 4Fe4S bacterial-type ferredoxin family. RnfC subfamily. As to quaternary structure, the complex is composed of six subunits: RsxA, RsxB, RsxC, RsxD, RsxE and RsxG. The cofactor is [4Fe-4S] cluster.

Its subcellular location is the cell inner membrane. Functionally, part of a membrane-bound complex that couples electron transfer with translocation of ions across the membrane. Required to maintain the reduced state of SoxR. The polypeptide is Ion-translocating oxidoreductase complex subunit C (Salmonella choleraesuis (strain SC-B67)).